Reading from the N-terminus, the 201-residue chain is 3-isopropylmalate dehydratase small subunit (201 aa).

It belongs to the LeuD family. LeuD type 1 subfamily. Heterodimer of LeuC and LeuD.

It catalyses the reaction (2R,3S)-3-isopropylmalate = (2S)-2-isopropylmalate. It functions in the pathway amino-acid biosynthesis; L-leucine biosynthesis; L-leucine from 3-methyl-2-oxobutanoate: step 2/4. Catalyzes the isomerization between 2-isopropylmalate and 3-isopropylmalate, via the formation of 2-isopropylmaleate. This is 3-isopropylmalate dehydratase small subunit from Shigella boydii serotype 18 (strain CDC 3083-94 / BS512).